Here is a 353-residue protein sequence, read N- to C-terminus: Lactosylceramide 4-alpha-galactosyltransferase (353 aa).

The Cytoplasmic portion of the chain corresponds to 1–22 (MSKPPDLLLRLLRGAPRQRVCT). A helical; Signal-anchor for type II membrane protein transmembrane segment spans residues 23-43 (LFIIGFKFTFFVSIMIYWHVV). Topologically, residues 44-353 (GEPKEKGQLY…TTHEAMKMYL (310 aa)) are lumenal. A glycan (N-linked (GlcNAc...) asparagine) is linked at N121. The DXD motif signature appears at 192–194 (DTD). N203 is a glycosylation site (N-linked (GlcNAc...) asparagine).

It belongs to the glycosyltransferase 32 family. Ubiquitous. Highly expressed in kidney, heart, spleen, liver, testis and placenta.

Its subcellular location is the golgi apparatus membrane. It carries out the reaction a beta-D-Gal-(1-&gt;4)-beta-D-Glc-(1&lt;-&gt;1)-Cer(d18:1(4E)) + UDP-alpha-D-galactose = a globoside Gb3Cer (d18:1(4E)) + UDP + H(+). It catalyses the reaction a beta-D-Gal-(1&lt;-&gt;1')-ceramide + UDP-alpha-D-galactose = alpha-D-Gal-(1-&gt;4)-beta-D-Gal-(1&lt;-&gt;1')-Cer + UDP + H(+). It functions in the pathway glycolipid biosynthesis. Functionally, catalyzes the transfer of galactose from UDP-alpha-D-galactose to lactosylceramide/beta-D-galactosyl-(1-&gt;4)-beta-D-glucosyl-(1&lt;-&gt;1)-ceramide(d18:1(4E)) to produce globotriaosylceramide/globoside Gb3Cer (d18:1(4E)). Also able to transfer galactose to galactosylceramide/beta-D-Gal-(1&lt;-&gt;1')-Cer. Globoside Gb3Cer is a glycosphingolipid of the globo serie, one of the major types of neutral root structures of glycosphingolipids, that constitute a significant portion of mammalian cell membranes. Globotriaosylceramide/globoside Gb3Cer in blood and tissue cell membranes is the antigen Pk of blood histogroup P. Its function is as follows. (Microbial infection) Globotriaosylceramide is one of the cellular ligands for bacterial verotoxins. This chain is Lactosylceramide 4-alpha-galactosyltransferase (A4GALT), found in Homo sapiens (Human).